A 373-amino-acid polypeptide reads, in one-letter code: Aminomethyltransferase (373 aa).

This sequence belongs to the GcvT family. As to quaternary structure, the glycine cleavage system is composed of four proteins: P, T, L and H.

It carries out the reaction N(6)-[(R)-S(8)-aminomethyldihydrolipoyl]-L-lysyl-[protein] + (6S)-5,6,7,8-tetrahydrofolate = N(6)-[(R)-dihydrolipoyl]-L-lysyl-[protein] + (6R)-5,10-methylene-5,6,7,8-tetrahydrofolate + NH4(+). In terms of biological role, the glycine cleavage system catalyzes the degradation of glycine. The protein is Aminomethyltransferase of Prochlorococcus marinus (strain SARG / CCMP1375 / SS120).